Here is a 397-residue protein sequence, read N- to C-terminus: Formate-dependent phosphoribosylglycinamide formyltransferase (397 aa).

Residues 21–22 and Glu-81 contribute to the N(1)-(5-phospho-beta-D-ribosyl)glycinamide site; that span reads EL. ATP is bound by residues Arg-113, Lys-154, 194 to 197, and Glu-202; that span reads EEYV. Positions 118–313 constitute an ATP-grasp domain; that stretch reads KLAAEKVKVP…EFQIHVRSAL (196 aa). Positions 272 and 284 each coordinate Mg(2+). Residues Asp-291, Lys-361, and 368–369 each bind N(1)-(5-phospho-beta-D-ribosyl)glycinamide; that span reads RR.

The protein belongs to the PurK/PurT family. In terms of assembly, homodimer.

It catalyses the reaction N(1)-(5-phospho-beta-D-ribosyl)glycinamide + formate + ATP = N(2)-formyl-N(1)-(5-phospho-beta-D-ribosyl)glycinamide + ADP + phosphate + H(+). Its pathway is purine metabolism; IMP biosynthesis via de novo pathway; N(2)-formyl-N(1)-(5-phospho-D-ribosyl)glycinamide from N(1)-(5-phospho-D-ribosyl)glycinamide (formate route): step 1/1. Involved in the de novo purine biosynthesis. Catalyzes the transfer of formate to 5-phospho-ribosyl-glycinamide (GAR), producing 5-phospho-ribosyl-N-formylglycinamide (FGAR). Formate is provided by PurU via hydrolysis of 10-formyl-tetrahydrofolate. In Sulfurisphaera tokodaii (strain DSM 16993 / JCM 10545 / NBRC 100140 / 7) (Sulfolobus tokodaii), this protein is Formate-dependent phosphoribosylglycinamide formyltransferase.